A 658-amino-acid chain; its full sequence is Vertnin (658 aa).

Belongs to the vertnin family.

It localises to the nucleus. Its function is as follows. Acts as a transcription factor that regulates development of thoracic vertebrae. This Bos taurus (Bovine) protein is Vertnin (VRTN).